Here is a 428-residue protein sequence, read N- to C-terminus: Protein terminus (428 aa).

The segment at 325–346 adopts a C3H1-type zinc-finger fold; that stretch reads CRRCRTQFSRRSKLHIHQKLRC.

The protein is Protein terminus (term) of Drosophila melanogaster (Fruit fly).